Consider the following 796-residue polypeptide: Cadherin-11 (796 aa).

An N-terminal signal peptide occupies residues 1–24; sequence MKENYCLQAALVCLSMLYHSQAFA. The propeptide occupies 25–53; that stretch reads LERRSHLHPSFHGHHEKGKEGQVLQRSKR. Cadherin domains follow at residues 54 to 159, 160 to 268, 269 to 383, 384 to 486, and 487 to 612; these read GWVW…PPEF, LHEI…PPKF, PQSV…PPMF, LAPS…DNAP, and KFAA…YILN. Over 54–617 the chain is Extracellular; sequence GWVWNQFFVI…AYILNAGLST (564 aa). 2 N-linked (GlcNAc...) asparagine glycosylation sites follow: asparagine 455 and asparagine 540. The chain crosses the membrane as a helical span at residues 618-640; sequence GALIAILACIVILLVIVVLFVTL. Residues 641-796 lie on the Cytoplasmic side of the membrane; sequence RRQKKEPLIV…GSKDTFDDDS (156 aa). Phosphoserine is present on serine 788. The residue at position 791 (threonine 791) is a Phosphothreonine.

Interacts with PCDH8. As to expression, selectively expressed in osteoblastic cell lines, precursor cell lines of osteoblasts, and primary osteoblastic cells from calvaria, as well as in lung, testis, and brain tissues at low levels.

Its subcellular location is the cell membrane. Its function is as follows. Cadherins are calcium-dependent cell adhesion proteins. They preferentially interact with themselves in a homophilic manner in connecting cells; cadherins may thus contribute to the sorting of heterogeneous cell types. Required for proper focal adhesion assembly. Involved in the regulation of cell migration. The protein is Cadherin-11 (Cdh11) of Mus musculus (Mouse).